The sequence spans 81 residues: X antigen family member 1 (81 aa).

K12 participates in a covalent cross-link: Glycyl lysine isopeptide (Lys-Gly) (interchain with G-Cter in SUMO2). S20 bears the Phosphoserine mark. Glycyl lysine isopeptide (Lys-Gly) (interchain with G-Cter in SUMO2) cross-links involve residues K61 and K65.

This sequence belongs to the GAGE family. As to expression, in normal tissues, highly expressed in testis. Expressed also in many different types of cancers: highly expressed in breast cancer, prostate cancer and many types of lung cancers, including squamous cell carcinoma, small cell carcinoma, non-small cell carcinoma, and adenocarcinoma, as well as in Ewing's cell lines, in some Ewing's sarcoma patient samples, and in one of one alveolar rhabdomyosarcoma patient sample.

In Homo sapiens (Human), this protein is X antigen family member 1.